The sequence spans 95 residues: Small ribosomal subunit protein bS18 (95 aa).

The protein belongs to the bacterial ribosomal protein bS18 family. In terms of assembly, part of the 30S ribosomal subunit. Forms a tight heterodimer with protein bS6.

In terms of biological role, binds as a heterodimer with protein bS6 to the central domain of the 16S rRNA, where it helps stabilize the platform of the 30S subunit. The chain is Small ribosomal subunit protein bS18 from Rickettsia rickettsii (strain Sheila Smith).